The sequence spans 416 residues: Glutamyl-tRNA reductase (416 aa).

Substrate-binding positions include 49–52 (TCNR), Ser-105, 110–112 (EPQ), and Gln-116. Cys-50 functions as the Nucleophile in the catalytic mechanism. An NADP(+)-binding site is contributed by 185 to 190 (GAGETI).

The protein belongs to the glutamyl-tRNA reductase family. Homodimer.

The catalysed reaction is (S)-4-amino-5-oxopentanoate + tRNA(Glu) + NADP(+) = L-glutamyl-tRNA(Glu) + NADPH + H(+). The protein operates within porphyrin-containing compound metabolism; protoporphyrin-IX biosynthesis; 5-aminolevulinate from L-glutamyl-tRNA(Glu): step 1/2. Catalyzes the NADPH-dependent reduction of glutamyl-tRNA(Glu) to glutamate 1-semialdehyde (GSA). The chain is Glutamyl-tRNA reductase from Shewanella sediminis (strain HAW-EB3).